Here is an 890-residue protein sequence, read N- to C-terminus: Receptor like protein 23 (890 aa).

The signal sequence occupies residues 1–22 (MSKALLHLHFLSLFLLCCVCHS). At 23–850 (SIFTLNFHFT…EEEEEVLNGR (828 aa)) the chain is on the extracellular side. N-linked (GlcNAc...) asparagine glycosylation is found at Asn-58, Asn-70, Asn-91, Asn-109, and Asn-145. LRR repeat units lie at residues 97–121 (FHQLRYVDLQNNNLTSSSLPSGFGN), 123–145 (KRLEGLFLSSNGFLGQVPSSFSN), 146–171 (LTMLAQLDLSYNKLTGSFPLVRGLRK), 173–195 (IVLDLSYNHFSGTLNPNSSLFEL), 196–218 (HQLRYLNLAFNNFSSSLPSKFGN), 220–243 (HRLENLILSSNGFSGQVPSTISNL), 244–268 (TRLTKLYLDQNKLTSSFPLVQNLTN), 270–290 (YELDLSYNKFFGVIPSSLLTL), 291–316 (PFLAHLALRENNLAGSVEVSNSSTSS), 318–339 (LEIMYLGSNHFEGQILEPISKL), 340–363 (INLKHLDLSFLNTSYPIDLKLFSS), 364–389 (LKSLRSLDLSGNSISSASLSSDSYIP), 391–411 (TLEMLTLRHCDINEFPNILKT), 412–436 (LKELVYIDISNNRMKGKIPEWLWSL), 438–461 (LLQSVTLGNNYFTGFQGSAEILVN), 462–485 (SSVLLLYLDSNNFEGALPDLPLSI), 487–506 (GFGVASNSFTSEIPLSICNR), 507–527 (SSLAAIDLSYNNFTGPIPPCL), 528–551 (RNLELVYLRNNNLEGSIPDALCDG), 553–575 (SLRTLDVSHNRLTGKLPRSFVNC), 577–598 (SLKFLSVINNRIEDTFPFWLKA), 599–623 (LPNLQVLTLRSNRFYGPISPPHQGP), 626–650 (FPELRIFEISDNKFTGSLPPNYFVN), 699–724 (LTSYAAIDFSGNRLEGQIPESIGLLK), 726–747 (LIAVNISNNAFTGHIPLSMANL), 748–771 (ENLESLDMSRNQLSGTIPNGLGSI), and 773–796 (FLAYINVSHNQLTGEIPQGTQITG). N-linked (GlcNAc...) asparagine glycosylation is found at Asn-189, Asn-207, Asn-242, and Asn-265. An N-linked (GlcNAc...) asparagine glycan is attached at Asn-311. N-linked (GlcNAc...) asparagine glycosylation is present at Asn-351. Residue Asn-461 is glycosylated (N-linked (GlcNAc...) asparagine). N-linked (GlcNAc...) asparagine glycosylation is found at Asn-505 and Asn-518. A glycan (N-linked (GlcNAc...) asparagine) is linked at Asn-574. Asn-730 carries an N-linked (GlcNAc...) asparagine glycan. An N-linked (GlcNAc...) asparagine glycan is attached at Asn-778. The helical transmembrane segment at 851-871 (AVAIGYGSGLLLGLAIAQVIA) threads the bilayer. The Cytoplasmic segment spans residues 872–890 (SYKPEWLVKIIGLNKRRKR).

It belongs to the RLP family. In terms of assembly, directly interacts with a 20-mer fragment (nlp20) from NLPs through its extracellular LRR domain. Component of a trimeric complex composed of RLP23, SOBIR1 and BAK1. BAK1 is recruited into a pre-formed RLP23-SOBIR1 complex in a ligand-dependent manner. Interacts with SOBIR1.

The protein localises to the cell membrane. In terms of biological role, involved in the perception of necrosis and ethylene-inducing peptide 1-like proteins (NLPs), that act as extracellular signals mediating immune activation. Component of the RLP23-SOBIR1-BAK1 complex that mediates NLP-triggered immunity. The chain is Receptor like protein 23 from Arabidopsis thaliana (Mouse-ear cress).